We begin with the raw amino-acid sequence, 353 residues long: C-X-C chemokine receptor type 2 (353 aa).

At 1 to 45 (FNMESDSFEDLWKGEDFSNYSYSSDLPPSLPDVAPCRPESLEINK) the chain is on the extracellular side. N-linked (GlcNAc...) asparagine glycosylation is present at N19. The helical transmembrane segment at 46–72 (YFVVIIYALVFLLSLLGNSLVMLVILY) threads the bilayer. Over 73-81 (SRVGRSVTD) the chain is Cytoplasmic. The chain crosses the membrane as a helical span at residues 82 to 102 (VYLLNLALADLLFALTLPIWA). The Extracellular portion of the chain corresponds to 103–117 (ASKVNGWIFGTFLCK). The cysteines at positions 116 and 193 are disulfide-linked. The chain crosses the membrane as a helical span at residues 118–139 (VVSLLKEVNFYSGILLLACISV). At 140 to 160 (DRYLAIVHATRTLTQKRYLVK) the chain is on the cytoplasmic side. The chain crosses the membrane as a helical span at residues 161–180 (FICLSIWGLSLLLALPVLLF). Residues 181-205 (RRTVYSSNVSPACYEDMGNNTANWR) lie on the Extracellular side of the membrane. A helical membrane pass occupies residues 206–228 (MLLRILPQSFGFIVPLLIMLFCY). Residues 229–248 (GFTLRTLFKAHMGQKHRAMR) lie on the Cytoplasmic side of the membrane. A helical membrane pass occupies residues 249 to 270 (VIFAVVLIFLLCWLPYSLVLLA). Over 271–291 (DTLMRTQVIQETCERRNHIDR) the chain is Extracellular. A helical transmembrane segment spans residues 292–312 (ALDATEILGILHSCLNPLIYA). Over 313 to 353 (FIGQKFRHGLLKILAIHGLISKDSLPKDSRPSFVGSSSGHT) the chain is Cytoplasmic.

This sequence belongs to the G-protein coupled receptor 1 family. As to quaternary structure, interacts with IL8. Interacts with GNAI2. Post-translationally, phosphorylated upon ligand binding; which is required for desensitization.

Its subcellular location is the cell membrane. Its function is as follows. Receptor for interleukin-8 which is a powerful neutrophil chemotactic factor. Binding of IL-8 to the receptor causes activation of neutrophils. This response is mediated via a G-protein that activates a phosphatidylinositol-calcium second messenger system. Binds to IL-8 with high affinity. Also binds with high affinity to CXCL3, GRO/MGSA and NAP-2. The protein is C-X-C chemokine receptor type 2 (CXCR2) of Macaca mulatta (Rhesus macaque).